A 62-amino-acid polypeptide reads, in one-letter code: uncharacterized protein (62 aa).

Positions 17 to 62 are disordered; the sequence is YNNYNNNNNNNNNNNNNNNNNNNNNNNNNNNNNNNNNNNNNNKNNN.

This is an uncharacterized protein from Dictyostelium discoideum (Social amoeba).